Reading from the N-terminus, the 571-residue chain is Calcium-dependent protein kinase 16 (571 aa).

The interval 1–74 (MGLCFSSAAK…TRHTPPHGKV (74 aa)) is disordered. G2 carries the N-myristoyl glycine lipid modification. C4 carries S-palmitoyl cysteine lipidation. Residues 63–72 (TPTRHTPPHG) show a composition bias toward basic residues. The 261-residue stretch at 108 to 368 (YTIGKLLGHG…AAQALSHPWV (261 aa)) folds into the Protein kinase domain. Residues 114–122 (LGHGQFGYT) and K137 contribute to the ATP site. The active-site Proton acceptor is D234. A Phosphoserine modification is found at S274. The tract at residues 374 to 404 (ASEIPIDISVLNNMRQFVKFSRLKQFALRAL) is autoinhibitory domain. EF-hand domains are found at residues 411 to 446 (EELA…DHPW), 448 to 483 (LKDA…VNQL), 490 to 525 (KWQQ…KGSI), and 528 to 555 (LLEE…ASIK). Ca(2+) is bound by residues D424, D426, N428, E435, D461, N463, D465, E472, D503, D505, D507, E514, D533, D535, D537, and K539. S541 bears the Phosphoserine mark. E544 is a binding site for Ca(2+).

Belongs to the protein kinase superfamily. Ser/Thr protein kinase family. CDPK subfamily.

The protein resides in the cell membrane. It localises to the nucleus. The catalysed reaction is L-seryl-[protein] + ATP = O-phospho-L-seryl-[protein] + ADP + H(+). It catalyses the reaction L-threonyl-[protein] + ATP = O-phospho-L-threonyl-[protein] + ADP + H(+). Activated by calcium. Autophosphorylation may play an important role in the regulation of the kinase activity. Its function is as follows. May play a role in signal transduction pathways that involve calcium as a second messenger. This chain is Calcium-dependent protein kinase 16 (CPK16), found in Arabidopsis thaliana (Mouse-ear cress).